The chain runs to 155 residues: MSEKYVVTWDMFQMHARRLSERLLPASQWKGIIAVSRGGLFPAAVLARELGLRHIETVCIASYHDHNNQGELQVLHAAQVPNGGEGFIVVDDLVDTGNTARAIRQMYPNAKFVTVFAKPAGAELVDDYVIDIPQNTWIEQPWDLGLTFVPPLSRK.

5-phospho-alpha-D-ribose 1-diphosphate-binding positions include Arg37–Gly38 and Asp91–Thr99. Position 92 (Asp92) interacts with Mg(2+). Guanine is bound by residues Asp95 and Ile138. Residues Asp95 and Ile138 each coordinate xanthine. GMP is bound by residues Asp95–Thr99 and Trp137–Ile138.

It belongs to the purine/pyrimidine phosphoribosyltransferase family. XGPT subfamily. In terms of assembly, homotetramer. Mg(2+) serves as cofactor.

The protein resides in the cell inner membrane. It carries out the reaction GMP + diphosphate = guanine + 5-phospho-alpha-D-ribose 1-diphosphate. The enzyme catalyses XMP + diphosphate = xanthine + 5-phospho-alpha-D-ribose 1-diphosphate. It catalyses the reaction IMP + diphosphate = hypoxanthine + 5-phospho-alpha-D-ribose 1-diphosphate. It functions in the pathway purine metabolism; GMP biosynthesis via salvage pathway; GMP from guanine: step 1/1. Its pathway is purine metabolism; XMP biosynthesis via salvage pathway; XMP from xanthine: step 1/1. Functionally, acts on guanine, xanthine and to a lesser extent hypoxanthine. In terms of biological role, purine salvage pathway enzyme that catalyzes the transfer of the ribosyl-5-phosphate group from 5-phospho-alpha-D-ribose 1-diphosphate (PRPP) to the N9 position of the 6-oxopurines guanine and xanthine to form the corresponding ribonucleotides GMP (guanosine 5'-monophosphate) and XMP (xanthosine 5'-monophosphate), with the release of PPi. To a lesser extent, also acts on hypoxanthine. The chain is Xanthine-guanine phosphoribosyltransferase from Haemophilus influenzae (strain ATCC 51907 / DSM 11121 / KW20 / Rd).